The sequence spans 250 residues: HTH-type transcriptional regulator SarS (250 aa).

2 consecutive DNA-binding regions (H-T-H motif) follow at residues 53–76 (FKKI…VLVK) and 177–200 (LKDL…NLKK).

It belongs to the SarA family.

Its subcellular location is the cytoplasm. In terms of biological role, transcriptional regulator that controls expression of some virulence factors in a cell density-dependent manner. This Staphylococcus aureus (strain Mu3 / ATCC 700698) protein is HTH-type transcriptional regulator SarS (sarS).